The chain runs to 261 residues: Putative hydro-lyase VSAL_I1435 (261 aa).

It belongs to the D-glutamate cyclase family.

This is Putative hydro-lyase VSAL_I1435 from Aliivibrio salmonicida (strain LFI1238) (Vibrio salmonicida (strain LFI1238)).